We begin with the raw amino-acid sequence, 55 residues long: ATP synthase F(0) complex subunit 8 (55 aa).

A helical transmembrane segment spans residues 9–29 (WFAIMVFSWFVFLIFLPPKIM).

The protein belongs to the ATPase protein 8 family. As to quaternary structure, component of the ATP synthase complex composed at least of ATP5F1A/subunit alpha, ATP5F1B/subunit beta, ATP5MC1/subunit c (homooctomer), MT-ATP6/subunit a, MT-ATP8/subunit 8, ATP5ME/subunit e, ATP5MF/subunit f, ATP5MG/subunit g, ATP5MK/subunit k, ATP5MJ/subunit j, ATP5F1C/subunit gamma, ATP5F1D/subunit delta, ATP5F1E/subunit epsilon, ATP5PF/subunit F6, ATP5PB/subunit b, ATP5PD/subunit d, ATP5PO/subunit OSCP. ATP synthase complex consists of a soluble F(1) head domain (subunits alpha(3) and beta(3)) - the catalytic core - and a membrane F(0) domain - the membrane proton channel (subunits c, a, 8, e, f, g, k and j). These two domains are linked by a central stalk (subunits gamma, delta, and epsilon) rotating inside the F1 region and a stationary peripheral stalk (subunits F6, b, d, and OSCP).

It is found in the mitochondrion membrane. Subunit 8, of the mitochondrial membrane ATP synthase complex (F(1)F(0) ATP synthase or Complex V) that produces ATP from ADP in the presence of a proton gradient across the membrane which is generated by electron transport complexes of the respiratory chain. ATP synthase complex consist of a soluble F(1) head domain - the catalytic core - and a membrane F(1) domain - the membrane proton channel. These two domains are linked by a central stalk rotating inside the F(1) region and a stationary peripheral stalk. During catalysis, ATP synthesis in the catalytic domain of F(1) is coupled via a rotary mechanism of the central stalk subunits to proton translocation. In vivo, can only synthesize ATP although its ATP hydrolase activity can be activated artificially in vitro. Part of the complex F(0) domain. This Tetraodon nigroviridis (Spotted green pufferfish) protein is ATP synthase F(0) complex subunit 8.